A 496-amino-acid chain; its full sequence is Lysine--tRNA ligase (496 aa).

Positions 409 and 416 each coordinate Mg(2+).

It belongs to the class-II aminoacyl-tRNA synthetase family. In terms of assembly, homodimer. It depends on Mg(2+) as a cofactor.

The protein localises to the cytoplasm. The catalysed reaction is tRNA(Lys) + L-lysine + ATP = L-lysyl-tRNA(Lys) + AMP + diphosphate. This Streptococcus pneumoniae serotype 19F (strain G54) protein is Lysine--tRNA ligase.